The chain runs to 30 residues: Brevinin-2Ej (30 aa).

The cysteines at positions 24 and 30 are disulfide-linked.

Expressed by the skin glands.

It localises to the secreted. Its function is as follows. Shows antibacterial activity against representative Gram-negative and Gram-positive bacterial species, and hemolytic activity. The protein is Brevinin-2Ej of Pelophylax ridibundus (Marsh frog).